The following is a 223-amino-acid chain: Phosphoribosylformylglycinamidine synthase subunit PurQ (223 aa).

One can recognise a Glutamine amidotransferase type-1 domain in the interval 2 to 223 (KTAIIQLPGL…FQSALELAKG (222 aa)). Cys-86 acts as the Nucleophile in catalysis. Active-site residues include His-196 and Glu-198.

In terms of assembly, part of the FGAM synthase complex composed of 1 PurL, 1 PurQ and 2 PurS subunits.

Its subcellular location is the cytoplasm. It carries out the reaction N(2)-formyl-N(1)-(5-phospho-beta-D-ribosyl)glycinamide + L-glutamine + ATP + H2O = 2-formamido-N(1)-(5-O-phospho-beta-D-ribosyl)acetamidine + L-glutamate + ADP + phosphate + H(+). It catalyses the reaction L-glutamine + H2O = L-glutamate + NH4(+). It functions in the pathway purine metabolism; IMP biosynthesis via de novo pathway; 5-amino-1-(5-phospho-D-ribosyl)imidazole from N(2)-formyl-N(1)-(5-phospho-D-ribosyl)glycinamide: step 1/2. Functionally, part of the phosphoribosylformylglycinamidine synthase complex involved in the purines biosynthetic pathway. Catalyzes the ATP-dependent conversion of formylglycinamide ribonucleotide (FGAR) and glutamine to yield formylglycinamidine ribonucleotide (FGAM) and glutamate. The FGAM synthase complex is composed of three subunits. PurQ produces an ammonia molecule by converting glutamine to glutamate. PurL transfers the ammonia molecule to FGAR to form FGAM in an ATP-dependent manner. PurS interacts with PurQ and PurL and is thought to assist in the transfer of the ammonia molecule from PurQ to PurL. This is Phosphoribosylformylglycinamidine synthase subunit PurQ from Bartonella henselae (strain ATCC 49882 / DSM 28221 / CCUG 30454 / Houston 1) (Rochalimaea henselae).